Reading from the N-terminus, the 256-residue chain is Ribonuclease 3 (256 aa).

One can recognise an RNase III domain in the interval 3–125 (LDALQQRLGY…IFGAVFLDGG (123 aa)). Glu-38 serves as a coordination point for Mg(2+). Asp-42 is a catalytic residue. Mg(2+)-binding residues include Asp-111 and Glu-114. Glu-114 is a catalytic residue. Residues 152-222 (DAKTLLQEYL…AKLALDEAHR (71 aa)) form the DRBM domain. Residues 226 to 256 (QLVKRSRAERTGKTRKQATPPDPQLSLRLKE) form a disordered region.

This sequence belongs to the ribonuclease III family. Homodimer. Requires Mg(2+) as cofactor.

The protein resides in the cytoplasm. It carries out the reaction Endonucleolytic cleavage to 5'-phosphomonoester.. Its function is as follows. Digests double-stranded RNA. Involved in the processing of primary rRNA transcript to yield the immediate precursors to the large and small rRNAs (23S and 16S). Processes some mRNAs, and tRNAs when they are encoded in the rRNA operon. Processes pre-crRNA and tracrRNA of type II CRISPR loci if present in the organism. This Ralstonia pickettii (strain 12J) protein is Ribonuclease 3.